The primary structure comprises 420 residues: Probable protein phosphatase 2C 73 (420 aa).

Residues 33–336 (GVSMHTKQGW…DDCAVVCLFL (304 aa)) enclose the PPM-type phosphatase domain. Mn(2+)-binding residues include Asp-69 and Gly-70. A compositionally biased stretch (polar residues) spans 96 to 105 (LKTEQDPSSN). Residues 96–119 (LKTEQDPSSNTDKETLEKSDCTSL) form a disordered region. The span at 106 to 115 (TDKETLEKSD) shows a compositional bias: basic and acidic residues. Asp-281 and Asp-327 together coordinate Mn(2+).

The protein belongs to the PP2C family. Mg(2+) is required as a cofactor. Requires Mn(2+) as cofactor.

It catalyses the reaction O-phospho-L-seryl-[protein] + H2O = L-seryl-[protein] + phosphate. The enzyme catalyses O-phospho-L-threonyl-[protein] + H2O = L-threonyl-[protein] + phosphate. The sequence is that of Probable protein phosphatase 2C 73 from Oryza sativa subsp. japonica (Rice).